Here is a 622-residue protein sequence, read N- to C-terminus: Chaperone protein HscA homolog (622 aa).

This sequence belongs to the heat shock protein 70 family.

Its function is as follows. Chaperone involved in the maturation of iron-sulfur cluster-containing proteins. Has a low intrinsic ATPase activity which is markedly stimulated by HscB. The sequence is that of Chaperone protein HscA homolog from Burkholderia cenocepacia (strain ATCC BAA-245 / DSM 16553 / LMG 16656 / NCTC 13227 / J2315 / CF5610) (Burkholderia cepacia (strain J2315)).